A 207-amino-acid polypeptide reads, in one-letter code: 3-isopropylmalate dehydratase small subunit (207 aa).

The protein belongs to the LeuD family. LeuD type 1 subfamily. In terms of assembly, heterodimer of LeuC and LeuD.

The catalysed reaction is (2R,3S)-3-isopropylmalate = (2S)-2-isopropylmalate. It participates in amino-acid biosynthesis; L-leucine biosynthesis; L-leucine from 3-methyl-2-oxobutanoate: step 2/4. Catalyzes the isomerization between 2-isopropylmalate and 3-isopropylmalate, via the formation of 2-isopropylmaleate. This is 3-isopropylmalate dehydratase small subunit from Rhodospirillum rubrum (strain ATCC 11170 / ATH 1.1.1 / DSM 467 / LMG 4362 / NCIMB 8255 / S1).